Here is a 670-residue protein sequence, read N- to C-terminus: MNTSPDYAQPGPNQFHHGAPSIYSSSSSNGVGGEVPITAQLLRGPPPPPPPPPTATATAATAAATTTTAAPSATGEPKQSGPTVPAACLACRSKHLKCDGGNPCARCQASESICQYVASRRGYKGPRRNGTQNPNKRHAAASDDGSPNSNGSNESCPMLLGAGVATPAAPSLSAFNPGLGIPETPMSTIGATPSYSGLQIYRQPYLDANGALVDINPRKAPQTIAERCIDSFYFHFFPGHPSVLPKDYLLRIAEQRNIEHLLAAMRWAGSLYFEVGPTRATFFEEAMRLMYAKDVPKDGFLVQAMLIVLVGLDGSCQQERARDILSDAERIAIEIGLFQRSFAAIHGQGIPVIEESWRRTWWDLFVVDGMVAGVHRQTNFLLFDIVADAGLPCEEHQYLAGTIPRPLYLDDFDNDIFSGEEYEFSSFAYRVASIRNLGRMMRLPESVFPGDNNVDRVENFLSNWRMHLPASKRDCLNKDMKLDEMMFQAWMINHACSIMLHQPLSQLDSSPARDVTSCAPYQMVRSGDTFNTHTRHIVTAAAEISKMVTYAVPITCHTHFFTCVLTLSSIVHLSKWALWFVQNDDDLRQQIRLNIGALNKLSTVWSAASRASGQVKGVAQEIFRSKKAAQQNNASFWVGFTQEEIISSMAADETIMSEINTMLEPVTTSG.

The tract at residues 1–84 (MNTSPDYAQP…GEPKQSGPTV (84 aa)) is disordered. The span at 44 to 54 (GPPPPPPPPPT) shows a compositional bias: pro residues. Positions 55 to 74 (ATATAATAAATTTTAAPSAT) are enriched in low complexity. Positions 88–114 (CLACRSKHLKCDGGNPCARCQASESIC) form a DNA-binding region, zn(2)-C6 fungal-type. A disordered region spans residues 122 to 157 (GYKGPRRNGTQNPNKRHAAASDDGSPNSNGSNESCP). Residues 142–155 (SDDGSPNSNGSNES) are compositionally biased toward low complexity.

The protein localises to the nucleus. Functionally, transcription factor; part of the gene cluster that mediates the biosynthesis of iso-A82775C, a enylepoxycyclohexane and biosynthetic precursor of the chloropestolide anticancer natural products. The protein is C6 finger domain transcription factor iacK of Pestalotiopsis fici (strain W106-1 / CGMCC3.15140).